Consider the following 183-residue polypeptide: UPF0397 protein VFMJ11_1662 (183 aa).

5 helical membrane-spanning segments follow: residues 8–28 (VVVIAIGAALYGIGGLPMFGI), 41–61 (AVLALFSVLYGPIVGFLVGFI), 75–95 (WLTWVLGSGIVGMIIGLFPII), 110–130 (FLIFVVLAFFGNVFGYGTSAF), and 147–167 (LCIIAAGNTFLIAIVGYFILN).

The protein belongs to the UPF0397 family.

Its subcellular location is the cell membrane. This chain is UPF0397 protein VFMJ11_1662, found in Aliivibrio fischeri (strain MJ11) (Vibrio fischeri).